We begin with the raw amino-acid sequence, 500 residues long: Glycerol kinase (500 aa).

Thr12 is a binding site for ADP. ATP contacts are provided by Thr12, Thr13, and Ser14. Position 12 (Thr12) interacts with sn-glycerol 3-phosphate. Residue Arg16 participates in ADP binding. Sn-glycerol 3-phosphate contacts are provided by Arg82, Glu83, Tyr135, and Asp245. Positions 82, 83, 135, 245, and 246 each coordinate glycerol. Residues Thr267 and Gly310 each coordinate ADP. ATP is bound by residues Thr267, Gly310, Gln314, and Gly411. Positions 411 and 415 each coordinate ADP.

Belongs to the FGGY kinase family. As to quaternary structure, homotetramer and homodimer (in equilibrium).

It catalyses the reaction glycerol + ATP = sn-glycerol 3-phosphate + ADP + H(+). It functions in the pathway polyol metabolism; glycerol degradation via glycerol kinase pathway; sn-glycerol 3-phosphate from glycerol: step 1/1. Its activity is regulated as follows. Activated by phosphorylation and inhibited by fructose 1,6-bisphosphate (FBP). In terms of biological role, key enzyme in the regulation of glycerol uptake and metabolism. Catalyzes the phosphorylation of glycerol to yield sn-glycerol 3-phosphate. In Clostridium perfringens (strain ATCC 13124 / DSM 756 / JCM 1290 / NCIMB 6125 / NCTC 8237 / Type A), this protein is Glycerol kinase.